Here is a 714-residue protein sequence, read N- to C-terminus: T-cell activation Rho GTPase-activating protein (714 aa).

In terms of domain architecture, Rho-GAP spans 88–277; sequence QPLSIICGEN…FLIDNCFEIF (190 aa). Disordered stretches follow at residues 290–357, 370–419, 451–508, 520–563, and 623–650; these read DDSL…ESSV, QDRR…AEDP, QGHI…HSMS, RTSS…QSQT, and KPST…HRLS. Over residues 299-311 the composition is skewed to polar residues; it reads SDVSTLQNDSAYD. Ser-398 carries the phosphoserine modification. Low complexity predominate over residues 459–471; sequence SRSSPGESLGSSP. 2 stretches are compositionally biased toward basic and acidic residues: residues 492 to 501 and 527 to 545; these read KTDKTKPQRE and EKSK…RKES.

In terms of tissue distribution, highly expressed in testis.

Its function is as follows. May function as a GTPase-activating protein. May play a role in transmission ratio distortion (TRD) in mouse, in which heterozygous males for t-locus transmit their t-carrying chromosome to 95% or more of their offspring. This is T-cell activation Rho GTPase-activating protein (Tagap) from Mus musculus (Mouse).